The sequence spans 549 residues: Protein EPD2 (549 aa).

The signal sequence occupies residues 1–20 (MISVIKSLLTLSVLSTLAAA). The N-linked (GlcNAc...) asparagine glycan is linked to asparagine 41. Cysteine 82 and cysteine 111 form a disulfide bridge. N-linked (GlcNAc...) asparagine glycans are attached at residues asparagine 173 and asparagine 261. Disulfide bonds link cysteine 224–cysteine 358, cysteine 242–cysteine 273, cysteine 381–cysteine 432, cysteine 390–cysteine 456, and cysteine 409–cysteine 414. Asparagine 467 carries N-linked (GlcNAc...) asparagine glycosylation. Residues 470–518 (ASTSCSAAGGRGLQSGRRSSTTRGGSSSSRSSSSSSSSSTGSGSSNAGI) are disordered. A compositionally biased stretch (low complexity) spans 484–514 (SGRRSSTTRGGSSSSRSSSSSSSSSTGSGSS).

Belongs to the glycosyl hydrolase 72 family.

Its subcellular location is the cell membrane. The protein is Protein EPD2 (EPD2) of Candida maltosa (Yeast).